Consider the following 182-residue polypeptide: UPF0316 protein BCAH820_3389 (182 aa).

Helical transmembrane passes span 6–26 (LIFVLQIIYVPILTIRTILLV), 32–52 (SAAAVGLLEGAIYIVSLGIVF), and 58–78 (WMNIVAYVIGFSAGLLLGGYI).

The protein belongs to the UPF0316 family.

Its subcellular location is the cell membrane. This chain is UPF0316 protein BCAH820_3389, found in Bacillus cereus (strain AH820).